We begin with the raw amino-acid sequence, 90 residues long: Putative UPF0401 protein YpjI (90 aa).

Belongs to the UPF0401 family.

This is Putative UPF0401 protein YpjI (ypjI) from Escherichia coli (strain K12).